The primary structure comprises 370 residues: Acyl-CoA:lysophosphatidylglycerol acyltransferase 1 (370 aa).

A helical transmembrane segment spans residues 22 to 42 (FAFMVVNNLVAIPSYICYVII). Residues 101–106 (HQATGD) carry the HXXXXD motif motif. Residues 342–362 (LWIFLIQSFAFLSGYMWYNII) form a helical membrane-spanning segment.

Belongs to the 1-acyl-sn-glycerol-3-phosphate acyltransferase family. As to expression, highly expressed in liver and placenta. Also expressed in peripheral blood, lung, kidney and brain. Detected at lower levels in colon. High expression is detected in brain and testis.

The protein localises to the endoplasmic reticulum membrane. It catalyses the reaction a 2-acyl-sn-glycero-3-phosphoethanolamine + octadecanoyl-CoA = 1-octadecanoyl-2-acyl-sn-glycero-3-phosphoethanolamine + CoA. The enzyme catalyses 2-(9Z-octadecenoyl)-sn-glycero-3-phosphoethanolamine + octadecanoyl-CoA = 1-octadecanoyl-2-(9Z-octadecenoyl)-sn-glycero-3-phosphoethanolamine + CoA. It carries out the reaction a 2-acyl-sn-glycero-3-phosphoethanolamine + hexadecanoyl-CoA = 1-hexadecanoyl-2-acyl-sn-glycero-3-phosphoethanolamine + CoA. The catalysed reaction is 2-(9Z-octadecenoyl)-sn-glycero-3-phosphoethanolamine + hexadecanoyl-CoA = 1-hexadecanoyl-2-(9Z-octadecenoyl)-sn-glycero-3-phosphoethanolamine + CoA. It catalyses the reaction 1-tetradecanoyl-sn-glycero-3-phospho-(1'-sn-glycerol) + hexadecanoyl-CoA = 1-tetradecanoyl-2-hexadecanoyl-sn-glycero-3-phospho-(1'-sn-glycerol) + CoA. The enzyme catalyses 1-hexadecanoyl-sn-glycero-3-phospho-(1'-sn-glycerol) + dodecanoyl-CoA = 1-hexadecanoyl-2-dodecanoyl-sn-glycero-3-phospho-(1'-sn-glycerol) + CoA. It carries out the reaction 1-hexadecanoyl-sn-glycero-3-phospho-(1'-sn-glycerol) + hexadecanoyl-CoA = 1,2-dihexadecanoyl-sn-glycero-3-phospho-(1'-sn-glycerol) + CoA. The catalysed reaction is 1-hexadecanoyl-sn-glycero-3-phospho-(1'-sn-glycerol) + octadecanoyl-CoA = 1-hexadecanoyl-2-octadecanoyl-sn-glycero-3-phospho-(1'-sn-glycerol) + CoA. It catalyses the reaction 1-octadecanoyl-sn-glycero-3-phospho-(1'-sn-glycerol) + hexadecanoyl-CoA = 1-octadecanoyl-2-hexadecanoyl-sn-glycero-3-phospho-(1'-sn-glycerol) + CoA. The enzyme catalyses 1-(9Z-octadecenoyl)-sn-glycero-3-phospho-(1'-sn-glycerol) + dodecanoyl-CoA = 1-(9Z-octadecenoyl)-2-dodecanoyl-sn-glycero-3-phospho-(1'-sn-glycerol) + CoA. It carries out the reaction 1-hexadecanoyl-sn-glycero-3-phospho-(1'-sn-glycerol) + (9Z)-octadecenoyl-CoA = 1-hexadecanoyl-2-(9Z-octadecenoyl)-sn-glycero-3-phospho-(1'-sn-glycerol) + CoA. The catalysed reaction is 1-(9Z-octadecenoyl)-sn-glycero-3-phospho-(1'-sn-glycerol) + hexadecanoyl-CoA = 1-(9Z-octadecenoyl)-2-hexadecanoyl-sn-glycero-3-phospho-(1'-sn-glycerol) + CoA. It catalyses the reaction 1-(9Z-octadecenoyl)-sn-glycero-3-phospho-(1'-sn-glycerol) + (9Z)-octadecenoyl-CoA = 1,2-di-(9Z-octadecenoyl)-sn-glycero-3-phospho-(1'-sn-glycerol) + CoA. The enzyme catalyses a 2-acylglycerol + an acyl-CoA = a 1,2-diacylglycerol + CoA. It carries out the reaction a 2-acylglycerol + hexadecanoyl-CoA = a 1-hexadecanoyl-2-acylglycerol + CoA. The catalysed reaction is a 1-acylglycerol + hexadecanoyl-CoA = an hexadecanoyl-acylglycerol + CoA. It catalyses the reaction a 2-acyl-sn-glycero-3-phosphocholine + an acyl-CoA = a 1,2-diacyl-sn-glycero-3-phosphocholine + CoA. The enzyme catalyses 2-(9Z-octadecenoyl)-sn-glycero-3-phosphocholine + octadecanoyl-CoA = 1-octadecanoyl-2-(9Z-octadecenoyl)-sn-glycero-3-phosphocholine + CoA. It carries out the reaction 2-(9Z,12Z-octadecadienoyl)-sn-glycero-3-phosphocholine + octadecanoyl-CoA = 1-octadecanoyl-2-(9Z,12Z)-octadecadienoyl-sn-glycero-3-phosphocholine + CoA. The catalysed reaction is 2-(5Z,8Z,11Z,14Z)-eicosatetraenoyl-sn-glycero-3-phosphocholine + octadecanoyl-CoA = 1-octadecanoyl-2-(5Z,8Z,11Z,14Z-eicosatetraenoyl)-sn-glycero-3-phosphocholine + CoA. It catalyses the reaction 2-(9Z-octadecenoyl)-sn-glycero-3-phosphocholine + hexadecanoyl-CoA = 1-hexadecanoyl-2-(9Z-octadecenoyl)-sn-glycero-3-phosphocholine + CoA. The enzyme catalyses 2-(9Z-octadecenoyl)-sn-glycero-3-phospho-L-serine + hexadecanoyl-CoA = 1-hexadecanoyl-2-(9Z-octadecenoyl)-sn-glycero-3-phospho-L-serine + CoA. It carries out the reaction 2-(4Z,7Z,10Z,13Z,16Z,19Z-docosahexaenoyl)-sn-glycero-3-phosphocholine + octadecanoyl-CoA = 1-octadecanoyl-2-(4Z,7Z,10Z,13Z,16Z,19Z-docosahexaenoyl)-sn-glycero-3-phosphocholine + CoA. The catalysed reaction is 1-(9Z-octadecenoyl)-sn-glycero-3-phospho-L-serine + octadecanoyl-CoA = 1-(9Z-octadecenoyl)-2-octadecanoyl-sn-glycero-3-phospho-L-serine + CoA. It catalyses the reaction a 2-acyl-sn-glycero-3-phosphoethanolamine + a fatty acyl-CoA = a 1,2-diacyl-sn-glycero-3-phosphoethanolamine + CoA. Lysophospholipid acyltransferase involved in fatty acyl chain remodeling of glycerophospholipids in the endoplasmic reticulum membrane. Selectively catalyzes the transfer and esterification of saturated long-chain fatty acids from acyl-CoA to the sn-1 position of 1-lyso-2-acyl phosphatidylethanolamines (1-lyso-PE, LPE), with a preference for stearoyl CoA over palmitoyl CoA as acyl donor. Acts in concert with an unknown phospholipase A1 to convert palmitate phosphatidylethanolamine (PE) species into stearate ones. Provides substrates to the PE methylation pathway, controlling stearate/palmitate composition of PE and phosphatidylcholine (PC) species with an overall impact on de novo hepatic lipid synthesis, body fat content and life span. Can acylate lysophosphatidylglycerols (LPG) using various saturated fatty acyl-CoAs as acyl donors. Can also acylate monoacylglycerols with a preference for 2-monoacylglycerols over 1-monoacylglycerols. Has no activity toward lysophosphatidic acids (LPA). The protein is Acyl-CoA:lysophosphatidylglycerol acyltransferase 1 of Homo sapiens (Human).